The primary structure comprises 349 residues: uncharacterized protein (349 aa).

Positions asparagine 51–glutamine 160 constitute a THUMP domain.

This is an uncharacterized protein from Methanocaldococcus jannaschii (strain ATCC 43067 / DSM 2661 / JAL-1 / JCM 10045 / NBRC 100440) (Methanococcus jannaschii).